The sequence spans 110 residues: Membrane-associated protein slr1513 (110 aa).

The protein localises to the cellular thylakoid membrane. Its subcellular location is the cell membrane. This Synechocystis sp. (strain ATCC 27184 / PCC 6803 / Kazusa) protein is Membrane-associated protein slr1513.